The following is a 513-amino-acid chain: Serine/threonine-protein phosphatase T (513 aa).

TPR repeat units follow at residues 12-45, 46-79, and 80-113; these read ALER…DSTQ, SIYF…DPKN, and IKAY…KPND. Positions 188 to 513 are catalytic; the sequence is KNMSQEFISK…MAYSNGGFGL (326 aa). Residues Asp-249, His-251, Asp-278, and Asn-310 each contribute to the Mn(2+) site. His-311 serves as the catalytic Proton donor/acceptor. His-359 and His-434 together coordinate Mn(2+).

Belongs to the PPP phosphatase family. PP-5 (PP-T) subfamily. In terms of assembly, interacts (via TPR repeats) with HSP82 (via C-terminal MEEVD pentapeptide). It depends on Mg(2+) as a cofactor. Mn(2+) is required as a cofactor.

It is found in the nucleus. It carries out the reaction O-phospho-L-seryl-[protein] + H2O = L-seryl-[protein] + phosphate. The enzyme catalyses O-phospho-L-threonyl-[protein] + H2O = L-threonyl-[protein] + phosphate. With respect to regulation, stimulated by arachidonic acid and other unsaturated fatty acids, and by arachidoyl coenzyme A. In terms of biological role, protein phosphatase that specifically binds to and dephosphorylates the molecular chaperone Hsp90 (HSC82 and HSP82). Dephosphorylation positively regulates the Hsp90 chaperone machinery. This Saccharomyces cerevisiae (strain ATCC 204508 / S288c) (Baker's yeast) protein is Serine/threonine-protein phosphatase T (PPT1).